Consider the following 203-residue polypeptide: Small ribosomal subunit protein uS4c (203 aa).

In terms of domain architecture, S4 RNA-binding spans 89 to 152 (MRLDNILFRL…QSRTLIQNSL (64 aa)).

It belongs to the universal ribosomal protein uS4 family. As to quaternary structure, part of the 30S ribosomal subunit. Contacts protein S5. The interaction surface between S4 and S5 is involved in control of translational fidelity.

The protein resides in the plastid. In terms of biological role, one of the primary rRNA binding proteins, it binds directly to 16S rRNA where it nucleates assembly of the body of the 30S subunit. With S5 and S12 plays an important role in translational accuracy. The sequence is that of Small ribosomal subunit protein uS4c (rps4) from Orobanche minor (Small broomrape).